Consider the following 210-residue polypeptide: Cancer/testis antigen 2 (210 aa).

Gly residues-rich tracts occupy residues 1–47 (MQAE…GPRG) and 56–66 (PRGGAPRGPHG). Disordered regions lie at residues 1–80 (MQAE…PCGA) and 154–197 (GLGS…DGCR). A compositionally biased stretch (basic and acidic residues) spans 163–177 (QKARDLRTPKHKVSE).

The protein belongs to the CTAG/PCC1 family. Testis and very low level in placenta and in some uterus samples. Observed in 25-50% of tumor samples of melanomas, non-small-cell lung carcinomas, bladder, prostate and head and neck cancers.

This is Cancer/testis antigen 2 (CTAG2) from Homo sapiens (Human).